We begin with the raw amino-acid sequence, 477 residues long: 3-isopropylmalate dehydratase large subunit 1 (477 aa).

[4Fe-4S] cluster-binding residues include C357, C417, and C420.

Belongs to the aconitase/IPM isomerase family. LeuC type 1 subfamily. Heterodimer of LeuC and LeuD. Requires [4Fe-4S] cluster as cofactor.

The enzyme catalyses (2R,3S)-3-isopropylmalate = (2S)-2-isopropylmalate. It participates in amino-acid biosynthesis; L-leucine biosynthesis; L-leucine from 3-methyl-2-oxobutanoate: step 2/4. In terms of biological role, catalyzes the isomerization between 2-isopropylmalate and 3-isopropylmalate, via the formation of 2-isopropylmaleate. This Bradyrhizobium diazoefficiens (strain JCM 10833 / BCRC 13528 / IAM 13628 / NBRC 14792 / USDA 110) protein is 3-isopropylmalate dehydratase large subunit 1.